The chain runs to 375 residues: Stomatin-2 (375 aa).

A disordered region spans residues 1-75 (MKTQPSEESA…IPVPTGQPRG (75 aa)). Low complexity predominate over residues 11 to 50 (SPAPVNPGNSGNSGNRRASSTRISFSDQLDGGDSGDSSSN). The chain crosses the membrane as a helical span at residues 120–140 (GLGFCGWFLMGLSWIMVISTF).

Belongs to the band 7/mec-2 family.

The protein localises to the membrane. Functionally, may be involved in cilia-related function. In Caenorhabditis elegans, this protein is Stomatin-2 (sto-2).